The following is a 238-amino-acid chain: Protein MIS12 homolog (238 aa).

Positions 117 to 149 (ELDAELDSLRDKLNVVGKRSVELDSELQALERS) form a coiled coil.

It belongs to the mis12 family.

It localises to the chromosome. The protein localises to the centromere. The protein resides in the kinetochore. In terms of biological role, constitutive component of kinetochores that is essential for proper cell division during mitotic cell cycle. May play a role in the modulation of centromere during meiosis. This is Protein MIS12 homolog from Arabidopsis thaliana (Mouse-ear cress).